Consider the following 217-residue polypeptide: 3,4-dihydroxy-2-butanone 4-phosphate synthase (217 aa).

Residues 37–38 (RE), D42, 150–154 (RGGHT), and E174 each bind D-ribulose 5-phosphate. Residue E38 coordinates Mg(2+). Residue H153 participates in Mg(2+) binding.

Belongs to the DHBP synthase family. Homodimer. It depends on Mg(2+) as a cofactor. Mn(2+) serves as cofactor.

It catalyses the reaction D-ribulose 5-phosphate = (2S)-2-hydroxy-3-oxobutyl phosphate + formate + H(+). It participates in cofactor biosynthesis; riboflavin biosynthesis; 2-hydroxy-3-oxobutyl phosphate from D-ribulose 5-phosphate: step 1/1. Its function is as follows. Catalyzes the conversion of D-ribulose 5-phosphate to formate and 3,4-dihydroxy-2-butanone 4-phosphate. In Salmonella paratyphi A (strain ATCC 9150 / SARB42), this protein is 3,4-dihydroxy-2-butanone 4-phosphate synthase.